A 504-amino-acid chain; its full sequence is Flavin-dependent halogenase armH3 (504 aa).

Positions 16, 19, 49, and 149 each coordinate FAD. Positions 329 and 330 each coordinate chloride. Residue Ile-331 participates in FAD binding. A disordered region spans residues 444-475; sequence NNLRTPVDTGAADVKAKHAPSETDAQNPLQSM.

The protein belongs to the flavin-dependent halogenase family.

The enzyme catalyses melleolide F + FADH2 + chloride + O2 = 6'-chloromelleolide F + FAD + 2 H2O + H(+). Flavin-dependent halogenase involved in the biosynthesis of melleolides, a range of antifungal and phytotoxic polyketide derivatives composed of an orsellinic acid (OA) moiety esterified to various sesquiterpene alcohols. The halogenase catalyzes the transfer of a single chlorine atom to the melleolide backbone, resulting in a 6'-chloromelleolide product. The enzyme acts on free substrate and does not depend on carrier-protein-dependent acceptor molecules. The chain is Flavin-dependent halogenase armH3 from Armillaria mellea (Honey mushroom).